The following is a 432-amino-acid chain: Putative transferase At1g60990, chloroplastic (432 aa).

A chloroplast-targeting transit peptide spans 1-57; the sequence is MNLLQSCKDMAMMMRIDSVSHITNTALLPCLYNGTVLRRRSLSLRKCGFRERKFQLR.

Belongs to the GcvT family. Expressed in young leaves (at protein level).

The protein localises to the plastid. It localises to the chloroplast. Its function is as follows. Folate-dependent protein involved in Fe/S cluster biogenesis. Functionally complements an E.coli mutant defective in ygfZ. The sequence is that of Putative transferase At1g60990, chloroplastic from Arabidopsis thaliana (Mouse-ear cress).